The chain runs to 249 residues: Diaminopimelate epimerase (249 aa).

Residues N11 and N60 each contribute to the substrate site. C69 serves as the catalytic Proton donor. Substrate is bound by residues 70 to 71 (GN), N164, and 182 to 183 (ER). The Proton acceptor role is filled by C192. 193–194 (GT) is a binding site for substrate.

Belongs to the diaminopimelate epimerase family. As to quaternary structure, homodimer.

The protein resides in the cytoplasm. The enzyme catalyses (2S,6S)-2,6-diaminopimelate = meso-2,6-diaminopimelate. Its pathway is amino-acid biosynthesis; L-lysine biosynthesis via DAP pathway; DL-2,6-diaminopimelate from LL-2,6-diaminopimelate: step 1/1. Functionally, catalyzes the stereoinversion of LL-2,6-diaminopimelate (L,L-DAP) to meso-diaminopimelate (meso-DAP), a precursor of L-lysine and an essential component of the bacterial peptidoglycan. This chain is Diaminopimelate epimerase, found in Campylobacter jejuni (strain RM1221).